We begin with the raw amino-acid sequence, 243 residues long: Aldehyde decarbonylase (243 aa).

Fe cation contacts are provided by Glu-45, Glu-73, His-76, Glu-128, and His-160.

Belongs to the aldehyde decarbonylase family. It depends on Binds 2 metal cations per subunit. The catalytic dinuclear metal-binding site could be either a di-iron or a manganese-iron cofactor. as a cofactor.

The catalysed reaction is a long-chain fatty aldehyde + 2 NADPH + O2 + H(+) = a long-chain alkane + formate + 2 NADP(+) + H2O. Functionally, catalyzes the decarbonylation of fatty aldehydes to alkanes. Requires the presence of ferredoxin, ferredoxin reductase and NADPH for in vitro decarbonylase activity. Involved in the biosynthesis of alkanes, mainly heptadecane and pentadecane. In Prochlorococcus marinus (strain MIT 9313), this protein is Aldehyde decarbonylase.